We begin with the raw amino-acid sequence, 487 residues long: H/ACA ribonucleoprotein complex subunit cbf5 (487 aa).

Aspartate 101 functions as the Nucleophile in the catalytic mechanism. The PUA domain occupies 273-348; it reads YKRIVVKDSA…VVAKVKRCIM (76 aa). Positions 400 to 410 are enriched in low complexity; the sequence is EEASAHAASES. A disordered region spans residues 400-487; the sequence is EEASAHAASE…QEKEDSDDSD (88 aa). Positions 435–459 are enriched in basic and acidic residues; that stretch reads MDVDETKEEKKRKRHEGETAEERAE. The segment covering 460 to 477 has biased composition (basic residues); the sequence is RKRKKKEKKEKKERRKSK.

Belongs to the pseudouridine synthase TruB family. As to quaternary structure, component of the small nucleolar ribonucleoprotein particles containing H/ACA-type snoRNAs (H/ACA snoRNPs).

The protein localises to the nucleus. It is found in the nucleolus. It carries out the reaction uridine in 5S rRNA = pseudouridine in 5S rRNA. It catalyses the reaction uridine in snRNA = pseudouridine in snRNA. The catalysed reaction is a uridine in mRNA = a pseudouridine in mRNA. Catalytic subunit of H/ACA small nucleolar ribonucleoprotein (H/ACA snoRNP) complex, which catalyzes pseudouridylation of rRNA. This involves the isomerization of uridine such that the ribose is subsequently attached to C5, instead of the normal N1. Pseudouridine ('psi') residues may serve to stabilize the conformation of rRNAs and play a central role in ribosomal RNA processing. The H/ACA snoRNP complex also mediates pseudouridylation of other types of RNAs. Catalyzes pseudouridylation at position 93 in U2 snRNA. Also catalyzes pseudouridylation of mRNAs; H/ACA-type snoRNAs probably guide pseudouridylation of mRNAs. In Aspergillus fumigatus (strain ATCC MYA-4609 / CBS 101355 / FGSC A1100 / Af293) (Neosartorya fumigata), this protein is H/ACA ribonucleoprotein complex subunit cbf5 (cbf5).